Here is a 1320-residue protein sequence, read N- to C-terminus: Tetratricopeptide repeat protein 21A (1320 aa).

TPR repeat units lie at residues Asn-4–Asp-38, Gly-110–Phe-143, Ala-146–Val-180, Leu-181–Phe-213, Pro-215–Asn-247, Val-334–Gly-367, Ile-502–Ser-534, Pro-572–Lys-605, Pro-728–Asp-761, Ala-762–Asp-795, Leu-797–Gln-828, Val-837–Ile-869, Ala-889–Asp-922, Lys-924–His-956, Glu-957–Asn-990, Pro-1028–Gly-1061, Glu-1201–Cys-1234, Lys-1236–Ala-1268, and Pro-1270–Tyr-1303.

Belongs to the TTC21 family. Interacts with IFT20. Interacts with IFT52. Interacts with IFT140. Interacts with CEP78; regulating IFT20 stability and localization. In terms of tissue distribution, strongly expressed in testis.

Its function is as follows. Intraflagellar transport (IFT)-associated protein required for spermatogenesis. Required for sperm flagellar formation and intraflagellar transport. The polypeptide is Tetratricopeptide repeat protein 21A (Homo sapiens (Human)).